A 387-amino-acid chain; its full sequence is Succinate--CoA ligase [ADP-forming] subunit beta (387 aa).

Residues 9 to 244 (KQLFAEYGIP…KTQEDETEVL (236 aa)) form the ATP-grasp domain. ATP is bound by residues Lys-46, 53–55 (GRG), Gly-102, and Glu-107. Residues Asn-199 and Asp-213 each coordinate Mg(2+). Substrate is bound by residues Asn-264 and 321–323 (GIV).

It belongs to the succinate/malate CoA ligase beta subunit family. Heterotetramer of two alpha and two beta subunits. Mg(2+) serves as cofactor.

It catalyses the reaction succinate + ATP + CoA = succinyl-CoA + ADP + phosphate. The enzyme catalyses GTP + succinate + CoA = succinyl-CoA + GDP + phosphate. Its pathway is carbohydrate metabolism; tricarboxylic acid cycle; succinate from succinyl-CoA (ligase route): step 1/1. In terms of biological role, succinyl-CoA synthetase functions in the citric acid cycle (TCA), coupling the hydrolysis of succinyl-CoA to the synthesis of either ATP or GTP and thus represents the only step of substrate-level phosphorylation in the TCA. The beta subunit provides nucleotide specificity of the enzyme and binds the substrate succinate, while the binding sites for coenzyme A and phosphate are found in the alpha subunit. In Xylella fastidiosa (strain M23), this protein is Succinate--CoA ligase [ADP-forming] subunit beta.